Here is a 501-residue protein sequence, read N- to C-terminus: MWKLWRAEEGAAALGGALFLLLFALGVRQLLKQRRPMGFPPGPPGLPFIGNIYSLAASSELPHVYMRKQSQVYGEIFSLDLGGISTVVLNGYDVVKECLVHQSEIFADRPCLPLFMKMTKMGGLLNSRYGRGWVDHRRLAVNSFRYFGYGQKSFESKILEETKFFNDAIETYKGRPFDFKQLITNAVSNITNLIIFGERFTYEDTDFQHMIELFSENVELAASASVFLYNAFPWIGILPFGKHQQLFRNAAVVYDFLSRLIEKASVNRKPQLPQHFVDAYLDEMDQGKNDPSSTFSKENLIFSVGELIIAGTETTTNVLRWAILFMALYPNIQGQVQKEIDLIMGPNGKPSWDDKCKMPYTEAVLHEVLRFCNIVPLGIFHATSEDAVVRGYSIPKGTTVITNLYSVHFDEKYWRDPEVFHPERFLDSSGYFAKKEALVPFSLGRRHCLGEHLARMEMFLFFTALLQRFHLHFPHELVPDLKPRLGMTLQPQPYLICAERR.

Positions 1–26 (MWKLWRAEEGAAALGGALFLLLFALG) are cleaved as a signal peptide. Alanine 250 provides a ligand contact to substrate. Cysteine 448 provides a ligand contact to heme.

It belongs to the cytochrome P450 family. In terms of assembly, homodimer. Requires heme as cofactor.

It is found in the endoplasmic reticulum membrane. It localises to the microsome membrane. The enzyme catalyses calciol + reduced [NADPH--hemoprotein reductase] + O2 = calcidiol + oxidized [NADPH--hemoprotein reductase] + H2O + H(+). It catalyses the reaction vitamin D2 + reduced [NADPH--hemoprotein reductase] + O2 = 25-hydroxyvitamin D2 + oxidized [NADPH--hemoprotein reductase] + H2O + H(+). The catalysed reaction is 1alpha-hydroxyvitamin D2 + reduced [NADPH--hemoprotein reductase] + O2 = 1alpha,25-dihydroxyvitamin D2 + oxidized [NADPH--hemoprotein reductase] + H2O + H(+). It carries out the reaction alfacalcidol + reduced [NADPH--hemoprotein reductase] + O2 = calcitriol + oxidized [NADPH--hemoprotein reductase] + H2O + H(+). Its pathway is hormone biosynthesis; vitamin D biosynthesis. Its function is as follows. A cytochrome P450 monooxygenase involved in activation of vitamin D precursors. Catalyzes hydroxylation at C-25 of both forms of vitamin D, vitamin D(2) and D(3) (calciol). Can metabolize vitamin D analogs/prodrugs 1alpha-hydroxyvitamin D(2) (doxercalciferol) and 1alpha-hydroxyvitamin D(3) (alfacalcidol) forming 25-hydroxy derivatives. Mechanistically, uses molecular oxygen inserting one oxygen atom into a substrate, and reducing the second into a water molecule, with two electrons provided by NADPH via cytochrome P450 reductase (CPR; NADPH-ferrihemoprotein reductase). The chain is Vitamin D 25-hydroxylase (CYP2R1) from Homo sapiens (Human).